We begin with the raw amino-acid sequence, 122 residues long: uncharacterized protein (122 aa).

This is an uncharacterized protein from Haemophilus phage HP1 (strain HP1c1) (Bacteriophage HP1).